A 1124-amino-acid polypeptide reads, in one-letter code: Phytochrome type A (1124 aa).

The span at 1 to 19 (MSTTRPSQSSNNSGRSRNS) shows a compositional bias: low complexity. The disordered stretch occupies residues 1–21 (MSTTRPSQSSNNSGRSRNSAR). One can recognise a GAF domain in the interval 218–401 (SMERLCDTMV…VFAIHVNKEI (184 aa)). Cysteine 323 serves as a coordination point for phytochromobilin. PAS domains lie at 617-687 (VTSE…LQGE) and 750-821 (DYKA…VNFG). The 220-residue stretch at 901-1120 (YMKRQIRNPL…ILSVELAAAH (220 aa)) folds into the Histidine kinase domain.

The protein belongs to the phytochrome family. As to quaternary structure, homodimer. Contains one covalently linked phytochromobilin chromophore.

Functionally, regulatory photoreceptor which exists in two forms that are reversibly interconvertible by light: the Pr form that absorbs maximally in the red region of the spectrum and the Pfr form that absorbs maximally in the far-red region. Photoconversion of Pr to Pfr induces an array of morphogenic responses, whereas reconversion of Pfr to Pr cancels the induction of those responses. Pfr controls the expression of a number of nuclear genes including those encoding the small subunit of ribulose-bisphosphate carboxylase, chlorophyll A/B binding protein, protochlorophyllide reductase, rRNA, etc. It also controls the expression of its own gene(s) in a negative feedback fashion. This chain is Phytochrome type A (PHYA), found in Lathyrus sativus (White vetchling).